The chain runs to 376 residues: Metal tolerance protein 6 (376 aa).

The tract at residues 1 to 28 (MAAAAGVAAGTGRGSGEGEELLPNAVEG) is disordered. The Cytoplasmic segment spans residues 1–123 (MAAAAGVAAG…CEKVARSEAL (123 aa)). Residues 124 to 144 (AIRLSNIANMVLFAAKVYASI) form a helical membrane-spanning segment. Residues 145 to 149 (RSGSL) lie on the Vacuolar side of the membrane. A helical transmembrane segment spans residues 150-170 (AIIASTLDSLLDLLSGFILWF). The Cytoplasmic segment spans residues 171–191 (TAFSKKTSNPYRYPIGKRRMQ). The helical transmembrane segment at 192-212 (PLGILVFASVMATLGLQIILE) threads the bilayer. The Vacuolar segment spans residues 213–231 (STRSLFYDGDTFRLTKEQE). A helical transmembrane segment spans residues 232–252 (KWVVDIMLSVTSVKLLLVVYC). Residues 253–376 (RSFTNEILAI…PEHARSHDTL (124 aa)) lie on the Cytoplasmic side of the membrane.

Belongs to the cation diffusion facilitator (CDF) transporter (TC 2.A.4) family. SLC30A subfamily.

Its subcellular location is the vacuole membrane. Its function is as follows. Involved in sequestration of excess metal in the cytoplasm into vacuoles to maintain metal homeostasis. The chain is Metal tolerance protein 6 (MTP6) from Oryza sativa subsp. japonica (Rice).